The chain runs to 366 residues: Dof zinc finger protein DOF1.3 (366 aa).

Residues 22–103 (DPYSSSSHVL…KTTELKKPDK (82 aa)) are disordered. Composition is skewed to low complexity over residues 25–45 (SSSSHVLPDSSSSSSSSSLSL) and 56–69 (TDNTSLKLSSNLNN). Composition is skewed to basic and acidic residues over residues 70-83 (ESKETSENSDDQHS) and 91-103 (EEEKTTELKKPDK). The segment at 105–159 (LPCPRCNSADTKFCYYNNYNVNQPRHFCRKCQRYWTAGGSMRIVPVGSGRRKNKG) adopts a Dof-type zinc-finger fold. 4 residues coordinate Zn(2+): cysteine 107, cysteine 110, cysteine 132, and cysteine 135.

It localises to the nucleus. Its function is as follows. Transcription factor that binds specifically to a 5'-AA[AG]G-3' consensus core sequence. This Arabidopsis thaliana (Mouse-ear cress) protein is Dof zinc finger protein DOF1.3 (DOF1.3).